The following is a 237-amino-acid chain: ATP-dependent dethiobiotin synthetase BioD (237 aa).

Residue Gly-21–Val-26 participates in ATP binding. Mg(2+) is bound at residue Thr-25. The active site involves Lys-48. Thr-52 is a binding site for substrate. Residues Asp-56, Glu-117–Gly-120, Ser-177–Cys-178, and Pro-209–Leu-211 contribute to the ATP site. Mg(2+) is bound by residues Asp-56 and Glu-117.

The protein belongs to the dethiobiotin synthetase family. As to quaternary structure, homodimer. The cofactor is Mg(2+).

The protein localises to the cytoplasm. It catalyses the reaction (7R,8S)-7,8-diammoniononanoate + CO2 + ATP = (4R,5S)-dethiobiotin + ADP + phosphate + 3 H(+). It carries out the reaction (7R,8S)-8-amino-7-(carboxyamino)nonanoate + ATP = (4R,5S)-dethiobiotin + ADP + phosphate + H(+). It functions in the pathway cofactor biosynthesis; biotin biosynthesis; biotin from 7,8-diaminononanoate: step 1/2. Its function is as follows. Catalyzes a mechanistically unusual reaction, the ATP-dependent insertion of CO2 between the N7 and N8 nitrogen atoms of 7,8-diaminopelargonic acid (DAPA, also called 7,8-diammoniononanoate) to form a ureido ring. This cyanobacterium does not encode bioA (which catalyzes the formation of the precursor for this reaction in the cannonical pathway), instead it encodes bioU, which replaces bioA and also performs the first half of the cannonical BioD reaction. Thus in this bacteria BioD has a different substrate. In Synechocystis replacement of bioU by bioA from E.coli leads to biotin synthesis, showing BioD can use the 'cannonical' 7,8-diammoniononanoate as a substrate. In Synechocystis sp. (strain ATCC 27184 / PCC 6803 / Kazusa), this protein is ATP-dependent dethiobiotin synthetase BioD.